Reading from the N-terminus, the 465-residue chain is Tubulin gamma chain (465 aa).

144–150 (AGGTGSG) is a binding site for GTP.

This sequence belongs to the tubulin family.

It is found in the cytoplasm. Its subcellular location is the cytoskeleton. The protein resides in the microtubule organizing center. It localises to the spindle pole body. Functionally, tubulin is the major constituent of microtubules. The gamma chain is found at microtubule organizing centers (MTOC) such as the spindle poles or the centrosome, suggesting that it is involved in the minus-end nucleation of microtubule assembly. The polypeptide is Tubulin gamma chain (TUB4) (Candida glabrata (strain ATCC 2001 / BCRC 20586 / JCM 3761 / NBRC 0622 / NRRL Y-65 / CBS 138) (Yeast)).